Consider the following 158-residue polypeptide: Peroxidase (158 aa).

P2 serves as a coordination point for substrate. H32 serves as a coordination point for heme b. T33 provides a ligand contact to Ca(2+). A disulfide bridge connects residues C39 and C64. An N-linked (GlcNAc...) asparagine glycan is attached at N48. Positions 78, 81, and 86 each coordinate Ca(2+).

It belongs to the peroxidase family. Classical plant (class III) peroxidase subfamily. Ca(2+) is required as a cofactor. Heme b serves as cofactor.

The enzyme catalyses 2 a phenolic donor + H2O2 = 2 a phenolic radical donor + 2 H2O. Functionally, removal of H(2)O(2), oxidation of toxic reductants, biosynthesis and degradation of lignin, suberization, auxin catabolism, response to environmental stresses such as wounding, pathogen attack and oxidative stress. These functions might be dependent on each isozyme/isoform in each plant tissue. In Lupinus polyphyllus (Large-leaved lupine), this protein is Peroxidase.